The primary structure comprises 555 residues: CTP synthase (555 aa).

Residues 1–267 (MAKYIFVTGG…GNYLTLRLGL (267 aa)) form an amidoligase domain region. Ser13 provides a ligand contact to CTP. A UTP-binding site is contributed by Ser13. ATP is bound at residue 14–19 (SVGKGI). Residue Tyr54 participates in L-glutamine binding. An ATP-binding site is contributed by Asp71. Positions 71 and 141 each coordinate Mg(2+). CTP contacts are provided by residues 148–150 (DIE), 188–193 (KTKPTQ), and Lys224. Residues 188-193 (KTKPTQ) and Lys224 each bind UTP. The region spanning 292–535 (AIALVGKYVE…IAAAAQTFRE (244 aa)) is the Glutamine amidotransferase type-1 domain. Gly354 lines the L-glutamine pocket. Cys381 functions as the Nucleophile; for glutamine hydrolysis in the catalytic mechanism. Residues 382–385 (LGMQ), Glu406, and Arg463 contribute to the L-glutamine site. Active-site residues include His508 and Glu510.

The protein belongs to the CTP synthase family. Homotetramer.

The catalysed reaction is UTP + L-glutamine + ATP + H2O = CTP + L-glutamate + ADP + phosphate + 2 H(+). It catalyses the reaction L-glutamine + H2O = L-glutamate + NH4(+). It carries out the reaction UTP + NH4(+) + ATP = CTP + ADP + phosphate + 2 H(+). The protein operates within pyrimidine metabolism; CTP biosynthesis via de novo pathway; CTP from UDP: step 2/2. With respect to regulation, allosterically activated by GTP, when glutamine is the substrate; GTP has no effect on the reaction when ammonia is the substrate. The allosteric effector GTP functions by stabilizing the protein conformation that binds the tetrahedral intermediate(s) formed during glutamine hydrolysis. Inhibited by the product CTP, via allosteric rather than competitive inhibition. In terms of biological role, catalyzes the ATP-dependent amination of UTP to CTP with either L-glutamine or ammonia as the source of nitrogen. Regulates intracellular CTP levels through interactions with the four ribonucleotide triphosphates. The sequence is that of CTP synthase from Roseiflexus castenholzii (strain DSM 13941 / HLO8).